A 77-amino-acid chain; its full sequence is Conotoxin G11.1 (77 aa).

The N-terminal stretch at 1 to 20 (MKLFLAIVLILMLQFLSTGA) is a signal peptide. Residues 21-45 (ETSDNHASRSTTALRDWLLGPKAKR) constitute a propeptide that is removed on maturation. Cystine bridges form between C46–C60, C53–C65, C59–C69, and C64–C76.

This sequence belongs to the conotoxin I3 superfamily. As to expression, expressed by the venom duct.

The protein resides in the secreted. May embed in the membrane and bind to the voltage sensor domain of a ion channel. Does not induce paralysis when injected in fish, leading to the hypothesis that it may be part of the sedative nirvana cabal. In Conus geographus (Geography cone), this protein is Conotoxin G11.1.